The chain runs to 168 residues: S-ribosylhomocysteine lyase (168 aa).

Fe cation contacts are provided by His54, His58, and Cys128.

Belongs to the LuxS family. In terms of assembly, homodimer. The cofactor is Fe cation.

It carries out the reaction S-(5-deoxy-D-ribos-5-yl)-L-homocysteine = (S)-4,5-dihydroxypentane-2,3-dione + L-homocysteine. In terms of biological role, involved in the synthesis of autoinducer 2 (AI-2) which is secreted by bacteria and is used to communicate both the cell density and the metabolic potential of the environment. The regulation of gene expression in response to changes in cell density is called quorum sensing. Catalyzes the transformation of S-ribosylhomocysteine (RHC) to homocysteine (HC) and 4,5-dihydroxy-2,3-pentadione (DPD). The protein is S-ribosylhomocysteine lyase of Mannheimia succiniciproducens (strain KCTC 0769BP / MBEL55E).